The sequence spans 602 residues: DNA ligase (602 aa).

Residue glutamate 262 participates in ATP binding. The N6-AMP-lysine intermediate role is filled by lysine 264. The ATP site is built by arginine 269, arginine 284, glutamate 314, phenylalanine 354, arginine 431, and lysine 437.

The protein belongs to the ATP-dependent DNA ligase family. Monomer. The cofactor is Mg(2+). Mn(2+) is required as a cofactor.

It catalyses the reaction ATP + (deoxyribonucleotide)n-3'-hydroxyl + 5'-phospho-(deoxyribonucleotide)m = (deoxyribonucleotide)n+m + AMP + diphosphate.. It carries out the reaction ADP + (deoxyribonucleotide)n-3'-hydroxyl + 5'-phospho-(deoxyribonucleotide)m = (deoxyribonucleotide)n+m + AMP + phosphate.. The catalysed reaction is GTP + (deoxyribonucleotide)n-3'-hydroxyl + 5'-phospho-(deoxyribonucleotide)m = (deoxyribonucleotide)n+m + GMP + diphosphate.. Its activity is regulated as follows. Inhibited in the presence of 100 mM KCl, NaCl or NH(4)Cl. Functionally, DNA ligase that seals nicks in double-stranded DNA during DNA replication, DNA recombination and DNA repair. Can also use ADP, but not NAD(+). The sequence is that of DNA ligase from Aeropyrum pernix (strain ATCC 700893 / DSM 11879 / JCM 9820 / NBRC 100138 / K1).